The primary structure comprises 460 residues: Cysteine--tRNA ligase (460 aa).

Cys-28 contributes to the Zn(2+) binding site. Residues 30 to 40 (MTVYDYCHLGH) carry the 'HIGH' region motif. Zn(2+) is bound by residues Cys-209, His-234, and Glu-238. The short motif at 266–270 (KMSKS) is the 'KMSKS' region element. Position 269 (Lys-269) interacts with ATP.

It belongs to the class-I aminoacyl-tRNA synthetase family. As to quaternary structure, monomer. Zn(2+) is required as a cofactor.

Its subcellular location is the cytoplasm. It catalyses the reaction tRNA(Cys) + L-cysteine + ATP = L-cysteinyl-tRNA(Cys) + AMP + diphosphate. The chain is Cysteine--tRNA ligase from Pseudomonas aeruginosa (strain UCBPP-PA14).